The chain runs to 513 residues: GMP synthase [glutamine-hydrolyzing] (513 aa).

The 191-residue stretch at 8–198 (MILVLDFGSQ…VFGVCDCDGK (191 aa)) folds into the Glutamine amidotransferase type-1 domain. Residue Cys-85 is the Nucleophile of the active site. Residues His-172 and Glu-174 contribute to the active site. One can recognise a GMPS ATP-PPase domain in the interval 199–388 (WSMENFIEIE…LGIPDDIVWR (190 aa)). Residue 226–232 (SGGVDSS) coordinates ATP.

As to quaternary structure, homodimer.

It carries out the reaction XMP + L-glutamine + ATP + H2O = GMP + L-glutamate + AMP + diphosphate + 2 H(+). The protein operates within purine metabolism; GMP biosynthesis; GMP from XMP (L-Gln route): step 1/1. Catalyzes the synthesis of GMP from XMP. This is GMP synthase [glutamine-hydrolyzing] from Bacillus pumilus (strain SAFR-032).